Reading from the N-terminus, the 287-residue chain is 4-hydroxybenzoate octaprenyltransferase (287 aa).

8 consecutive transmembrane segments (helical) span residues 19–39 (PIGS…AADG), 43–63 (LHVL…GCVI), 94–116 (LALA…PLVI), 135–155 (FFAI…PMGF), 160–180 (GEVP…AVAY), 207–227 (FDVA…GWVG), 234–254 (ALYF…YTLI), and 269–286 (NNWL…DYLI).

The protein belongs to the UbiA prenyltransferase family. Mg(2+) is required as a cofactor.

The protein localises to the cell inner membrane. It catalyses the reaction all-trans-octaprenyl diphosphate + 4-hydroxybenzoate = 4-hydroxy-3-(all-trans-octaprenyl)benzoate + diphosphate. It participates in cofactor biosynthesis; ubiquinone biosynthesis. Its function is as follows. Catalyzes the prenylation of para-hydroxybenzoate (PHB) with an all-trans polyprenyl group. Mediates the second step in the final reaction sequence of ubiquinone-8 (UQ-8) biosynthesis, which is the condensation of the polyisoprenoid side chain with PHB, generating the first membrane-bound Q intermediate 3-octaprenyl-4-hydroxybenzoate. The chain is 4-hydroxybenzoate octaprenyltransferase from Azoarcus sp. (strain BH72).